The primary structure comprises 240 residues: 1-(5-phosphoribosyl)-5-[(5-phosphoribosylamino)methylideneamino] imidazole-4-carboxamide isomerase 1 (240 aa).

Asp8 acts as the Proton acceptor in catalysis. Residue Asp129 is the Proton donor of the active site.

Belongs to the HisA/HisF family.

It localises to the cytoplasm. The enzyme catalyses 1-(5-phospho-beta-D-ribosyl)-5-[(5-phospho-beta-D-ribosylamino)methylideneamino]imidazole-4-carboxamide = 5-[(5-phospho-1-deoxy-D-ribulos-1-ylimino)methylamino]-1-(5-phospho-beta-D-ribosyl)imidazole-4-carboxamide. It functions in the pathway amino-acid biosynthesis; L-histidine biosynthesis; L-histidine from 5-phospho-alpha-D-ribose 1-diphosphate: step 4/9. This is 1-(5-phosphoribosyl)-5-[(5-phosphoribosylamino)methylideneamino] imidazole-4-carboxamide isomerase 1 from Ruegeria pomeroyi (strain ATCC 700808 / DSM 15171 / DSS-3) (Silicibacter pomeroyi).